An 89-amino-acid chain; its full sequence is Small ribosomal subunit protein uS19 (89 aa).

This sequence belongs to the universal ribosomal protein uS19 family.

In terms of biological role, protein S19 forms a complex with S13 that binds strongly to the 16S ribosomal RNA. The protein is Small ribosomal subunit protein uS19 of Xylella fastidiosa (strain 9a5c).